Consider the following 178-residue polypeptide: UPF0302 protein BCAH187_A1683 (178 aa).

The protein belongs to the UPF0302 family.

The polypeptide is UPF0302 protein BCAH187_A1683 (Bacillus cereus (strain AH187)).